Here is a 279-residue protein sequence, read N- to C-terminus: tRNA pseudouridine synthase B (279 aa).

Asp38 acts as the Nucleophile in catalysis.

This sequence belongs to the pseudouridine synthase TruB family. Type 1 subfamily.

It catalyses the reaction uridine(55) in tRNA = pseudouridine(55) in tRNA. Functionally, responsible for synthesis of pseudouridine from uracil-55 in the psi GC loop of transfer RNAs. In Acholeplasma laidlawii (strain PG-8A), this protein is tRNA pseudouridine synthase B.